The chain runs to 625 residues: Protein arginine N-methyltransferase skb1 (625 aa).

Residues 280 to 588 (LQVPLQPLSY…WRLTDGMRVW (309 aa)) form the SAM-dependent MTase PRMT-type domain. Residues Tyr296, 305 to 306 (KY), Glu359, and 386 to 387 (DM) each bind S-adenosyl-L-methionine. Catalysis depends on proton donor/acceptor residues Glu402 and Glu411.

It belongs to the class I-like SAM-binding methyltransferase superfamily. Protein arginine N-methyltransferase family. As to quaternary structure, interacts with the N-terminal regulatory domain of shk1. Shk1, cdc42 and skb1 are able to form a ternary complex in vivo. Interacts with orb6. Interacts with Cdr1 and the Cdr1 inhibitory target Wee1.

It is found in the nucleus. Its subcellular location is the cell tip. The protein resides in the cell septum. The protein localises to the cytoplasm. It localises to the cell cortex. In terms of biological role, S-adenosyl-L-methionine-dependent protein-arginine N-methyltransferase that can catalyze both the mono- and symmetric (type II) dimethylation of the guanidino nitrogens of arginine residues in target proteins. Delays mitotic entry by inhibiting the Cdr1-Wee1 signaling pathway. Cortical nodes sequester Skb1 from its regulatory targets Cdr1 and Wee1. Positively modulates the shk1 kinase function. May be a mediator of hyperosmotic stress response. Involved in the control of cell polarity by regulating the subcellular localization of Orb6 kinase. In Schizosaccharomyces pombe (strain 972 / ATCC 24843) (Fission yeast), this protein is Protein arginine N-methyltransferase skb1.